A 284-amino-acid polypeptide reads, in one-letter code: 2-dehydro-3-deoxyphosphooctonate aldolase (284 aa).

It belongs to the KdsA family.

The protein localises to the cytoplasm. It carries out the reaction D-arabinose 5-phosphate + phosphoenolpyruvate + H2O = 3-deoxy-alpha-D-manno-2-octulosonate-8-phosphate + phosphate. It participates in carbohydrate biosynthesis; 3-deoxy-D-manno-octulosonate biosynthesis; 3-deoxy-D-manno-octulosonate from D-ribulose 5-phosphate: step 2/3. It functions in the pathway bacterial outer membrane biogenesis; lipopolysaccharide biosynthesis. The chain is 2-dehydro-3-deoxyphosphooctonate aldolase from Edwardsiella ictaluri (strain 93-146).